The chain runs to 266 residues: MQRINALTIAGTDPSGGAGIQADLKTFSALGAYGCSVITALVAQNTCGVQSVYRIEPDFVAAQLDSVFSDVRIDTTKIGMLAETDIVEAVAERLQRHHVRNVVLDTVMLAKSGDPLLSPSAIETLRVRLLPQVSLITPNLPEAAALLDAPHARTEQEMLAQGRALLAMGCEAVLMKGGHLEDAQSPDWLFTREGEQRFSAPRVNTKNTHGTGCTLSAALAALRPRHRSWGETVNEAKAWLSAALAQADTLEVGKGIGPVHHFHAWW.

Gln-44 serves as a coordination point for 4-amino-5-hydroxymethyl-2-methylpyrimidine.

This sequence belongs to the ThiD family. As to quaternary structure, homodimer.

The catalysed reaction is 4-amino-5-hydroxymethyl-2-methylpyrimidine + ATP = 4-amino-2-methyl-5-(phosphooxymethyl)pyrimidine + ADP + H(+). It catalyses the reaction 4-amino-2-methyl-5-(phosphooxymethyl)pyrimidine + ATP = 4-amino-2-methyl-5-(diphosphooxymethyl)pyrimidine + ADP. It participates in cofactor biosynthesis; thiamine diphosphate biosynthesis; 4-amino-2-methyl-5-diphosphomethylpyrimidine from 5-amino-1-(5-phospho-D-ribosyl)imidazole: step 2/3. It functions in the pathway cofactor biosynthesis; thiamine diphosphate biosynthesis; 4-amino-2-methyl-5-diphosphomethylpyrimidine from 5-amino-1-(5-phospho-D-ribosyl)imidazole: step 3/3. Its function is as follows. Catalyzes the phosphorylation of hydroxymethylpyrimidine phosphate (HMP-P) to HMP-PP, and of HMP to HMP-P. This chain is Hydroxymethylpyrimidine/phosphomethylpyrimidine kinase (thiD), found in Salmonella typhimurium (strain LT2 / SGSC1412 / ATCC 700720).